The following is a 370-amino-acid chain: Lipoyl synthase 1, chloroplastic (370 aa).

Disordered regions lie at residues 1–25 and 39–67; these read MMQS…PVCR and EAAP…KKPA. Residues 1-37 constitute a chloroplast transit peptide; that stretch reads MMQSSLARPLPRPPIRPACGNPVCRSRPGSVSVARCR. The [4Fe-4S] cluster site is built by Cys95, Cys100, Cys106, Cys132, Cys136, Cys139, and Ser347. The Radical SAM core domain occupies 115-336; it reads GEGDGIATAT…KEYGESVGFR (222 aa).

The protein belongs to the radical SAM superfamily. Lipoyl synthase family. Requires [4Fe-4S] cluster as cofactor.

It is found in the plastid. The protein resides in the chloroplast. It carries out the reaction [[Fe-S] cluster scaffold protein carrying a second [4Fe-4S](2+) cluster] + N(6)-octanoyl-L-lysyl-[protein] + 2 oxidized [2Fe-2S]-[ferredoxin] + 2 S-adenosyl-L-methionine + 4 H(+) = [[Fe-S] cluster scaffold protein] + N(6)-[(R)-dihydrolipoyl]-L-lysyl-[protein] + 4 Fe(3+) + 2 hydrogen sulfide + 2 5'-deoxyadenosine + 2 L-methionine + 2 reduced [2Fe-2S]-[ferredoxin]. It participates in protein modification; protein lipoylation via endogenous pathway; protein N(6)-(lipoyl)lysine from octanoyl-[acyl-carrier-protein]: step 2/2. In terms of biological role, catalyzes the radical-mediated insertion of two sulfur atoms into the C-6 and C-8 positions of the octanoyl moiety bound to the lipoyl domains of lipoate-dependent enzymes, thereby converting the octanoylated domains into lipoylated derivatives. The protein is Lipoyl synthase 1, chloroplastic of Oryza sativa subsp. indica (Rice).